A 433-amino-acid chain; its full sequence is Glucose-1-phosphate adenylyltransferase (433 aa).

Alpha-D-glucose 1-phosphate contacts are provided by residues tyrosine 117, glycine 182, 197–198, and serine 215; that span reads EK.

Belongs to the bacterial/plant glucose-1-phosphate adenylyltransferase family. Homotetramer.

The catalysed reaction is alpha-D-glucose 1-phosphate + ATP + H(+) = ADP-alpha-D-glucose + diphosphate. It participates in glycan biosynthesis; glycogen biosynthesis. Functionally, involved in the biosynthesis of ADP-glucose, a building block required for the elongation reactions to produce glycogen. Catalyzes the reaction between ATP and alpha-D-glucose 1-phosphate (G1P) to produce pyrophosphate and ADP-Glc. The chain is Glucose-1-phosphate adenylyltransferase from Nitrosomonas europaea (strain ATCC 19718 / CIP 103999 / KCTC 2705 / NBRC 14298).